A 245-amino-acid polypeptide reads, in one-letter code: 6-carboxyhexanoate--CoA ligase (245 aa).

Belongs to the BioW family. Homodimer. It depends on Mg(2+) as a cofactor.

It catalyses the reaction heptanedioate + ATP + CoA = 6-carboxyhexanoyl-CoA + AMP + diphosphate. It participates in metabolic intermediate metabolism; pimeloyl-CoA biosynthesis; pimeloyl-CoA from pimelate: step 1/1. In terms of biological role, catalyzes the transformation of pimelate into pimeloyl-CoA with concomitant hydrolysis of ATP to AMP. The chain is 6-carboxyhexanoate--CoA ligase from Sulfurihydrogenibium sp. (strain YO3AOP1).